Reading from the N-terminus, the 222-residue chain is Glutathione-specific gamma-glutamylcyclotransferase 1 (222 aa).

The segment covering 1-22 has biased composition (low complexity); the sequence is MKQESAAPNTPPTSQSPTPSAQ. A disordered region spans residues 1–24; it reads MKQESAAPNTPPTSQSPTPSAQFP. 35-40 is a binding site for substrate; sequence IFGYGS. Catalysis depends on Glu-115, which acts as the Proton acceptor.

This sequence belongs to the gamma-glutamylcyclotransferase family. ChaC subfamily. Interacts with NOTCH1 (via extracellular region).

The protein resides in the cytoplasm. It localises to the cytosol. The protein localises to the golgi apparatus. Its subcellular location is the trans-Golgi network. It catalyses the reaction glutathione = L-cysteinylglycine + 5-oxo-L-proline. Functionally, catalyzes the cleavage of glutathione into 5-oxo-L-proline and a Cys-Gly dipeptide. Acts specifically on glutathione, but not on other gamma-glutamyl peptides. Glutathione depletion is an important factor for apoptosis initiation and execution. Acts as a pro-apoptotic component of the unfolded protein response pathway by mediating the pro-apoptotic effects of the ATF4-ATF3-DDIT3/CHOP cascade. Negative regulator of Notch signaling pathway involved in embryonic neurogenesis: acts by inhibiting Notch cleavage by furin, maintaining Notch in an immature inactive form, thereby promoting neurogenesis in embryos. This Homo sapiens (Human) protein is Glutathione-specific gamma-glutamylcyclotransferase 1.